The following is a 349-amino-acid chain: Ferredoxin--NADP reductase 1 (349 aa).

The FAD site is built by glutamate 36, lysine 44, tyrosine 48, valine 88, leucine 123, aspartate 290, and serine 331.

The protein belongs to the ferredoxin--NADP reductase type 2 family. In terms of assembly, homodimer. FAD serves as cofactor.

The catalysed reaction is 2 reduced [2Fe-2S]-[ferredoxin] + NADP(+) + H(+) = 2 oxidized [2Fe-2S]-[ferredoxin] + NADPH. The polypeptide is Ferredoxin--NADP reductase 1 (Bacillus licheniformis (strain ATCC 14580 / DSM 13 / JCM 2505 / CCUG 7422 / NBRC 12200 / NCIMB 9375 / NCTC 10341 / NRRL NRS-1264 / Gibson 46)).